Consider the following 107-residue polypeptide: Wound-induced proteinase inhibitor 1 (107 aa).

The first 23 residues, 1–23 (MESKFAHIIVFFLLATSFETLLA), serve as a signal peptide directing secretion. The propeptide occupies 24–36 (RKESDGPEVIELQ).

The protein belongs to the protease inhibitor I13 (potato type I serine protease inhibitor) family. In terms of assembly, heterogeneous tetramers of similar chains.

Its function is as follows. Inhibits both chymotrypsin and trypsin. The sequence is that of Wound-induced proteinase inhibitor 1 from Solanum tuberosum (Potato).